We begin with the raw amino-acid sequence, 161 residues long: V-type proton ATPase 16 kDa proteolipid subunit c (161 aa).

Residues 1–15 (MSYDLATAERAAYAP) are Lumenal-facing. The chain crosses the membrane as a helical span at residues 16–36 (FFGYMGAASAQIFTVLGAAYG). Over 37 to 58 (TAKSAVGISSMGVMRPELIMKS) the chain is Cytoplasmic. Residues 59–79 (VIPVIMAGIIGIYGLVVAMVL) traverse the membrane as a helical segment. At 80–98 (RGKVTSASAGYTLDKGFAH) the chain is on the lumenal side. A helical membrane pass occupies residues 99 to 119 (LAAGLTCGLCGLGAGYAIGIV). Residues 120–137 (GDAGVRGTAQQPRLFVGM) are Cytoplasmic-facing. Residues 138–158 (ILILIFSEVLGLYGMIVALIL) traverse the membrane as a helical segment. The Lumenal segment spans residues 159–161 (GTS).

It belongs to the V-ATPase proteolipid subunit family. As to quaternary structure, V-ATPase is a heteromultimeric enzyme made up of two complexes: the ATP-hydrolytic V1 complex and the proton translocation V0 complex. The V1 complex consists of three catalytic AB heterodimers that form a heterohexamer, three peripheral stalks each consisting of EG heterodimers, one central rotor including subunits D and F, and the regulatory subunits C and H. The proton translocation complex V0 consists of the proton transport subunit a, a ring of proteolipid subunits c9c'', rotary subunit d, subunits e and f, and the accessory subunits vah-19/Ac45 and vah-20/PRR.

The protein resides in the membrane. Proton-conducting pore forming subunit of the V0 complex of vacuolar(H+)-ATPase (V-ATPase), a multisubunit enzyme composed of a peripheral complex (V1) that hydrolyzes ATP and a membrane integral complex (V0) that translocates protons. V-ATPase is responsible for acidifying and maintaining the pH of intracellular compartments and in some cell types, is targeted to the plasma membrane, where it is responsible for acidifying the extracellular environment. This is V-type proton ATPase 16 kDa proteolipid subunit c (12) from Ascaris suum (Pig roundworm).